We begin with the raw amino-acid sequence, 231 residues long: DNA mismatch repair protein MutH (231 aa).

This sequence belongs to the MutH family.

The protein resides in the cytoplasm. In terms of biological role, sequence-specific endonuclease that cleaves unmethylated GATC sequences. It is involved in DNA mismatch repair. This is DNA mismatch repair protein MutH from Salmonella enteritidis PT4 (strain P125109).